A 568-amino-acid chain; its full sequence is Fumarate hydratase 2 (568 aa).

Cysteine 133 provides a ligand contact to [4Fe-4S] cluster. (S)-malate contacts are provided by residues 134–135 (QD), arginine 173, glycine 216, and 219–225 (NKAYLYQ). Residues cysteine 252 and cysteine 346 each coordinate [4Fe-4S] cluster. Residues arginine 421, 467–471 (TTAGR), and lysine 491 each bind (S)-malate.

The protein belongs to the class-I fumarase family. In terms of assembly, homodimer. Requires [4Fe-4S] cluster as cofactor.

The protein localises to the cytoplasm. It is found in the cytosol. It carries out the reaction (S)-malate = fumarate + H2O. Specifically and competitively inhibited by 2-thiomalate, which coordinates with the catalytic [4Fe-4S] cluster. Weakly inhibited by malonate. Cytosolic fumarate hydratase that catalyzes the reversible hydration of fumarate to (S)-malate. The polypeptide is Fumarate hydratase 2 (Leishmania major).